Consider the following 271-residue polypeptide: MAGLEVLFASAAPAMTCPQDALVCFLHWEVVTNGYYGLGTGDQPDPNDKKSELLPAEWNSNKELYALRYESKDGARKLLLKAVSVENGMIINVLEHGTQQVADLTLNLDDYIDAEDLSDFHRTYKNSEELRSRIRSGIITPIHEQWEKVRLSSPPREFPPATAREVDPLRISSHHPHTSRQPTWRDPLSPFAVGGEDLDPFGCQRGGMIVDPLRSGFPRALIDPSSGLPNRLPPGAVPPGARFDPFGPIGTSPSGPNPDHLPPPGYDDMYL.

A2 is modified (N-acetylalanine). The interval 2–150 is important for homodimerization and interaction with FBXO7; that stretch reads AGLEVLFASA…PIHEQWEKVR (149 aa). Phosphoserine occurs at positions 153 and 189. Position 205 is an omega-N-methylarginine (R205). R219 is modified (asymmetric dimethylarginine). Positions 221 to 271 are disordered; it reads LIDPSSGLPNRLPPGAVPPGARFDPFGPIGTSPSGPNPDHLPPPGYDDMYL. R231 carries the post-translational modification Omega-N-methylarginine. A Phosphoserine modification is found at S252. A compositionally biased stretch (pro residues) spans 255 to 265; the sequence is GPNPDHLPPPG.

It belongs to the proteasome inhibitor PI31 family. In terms of assembly, monomer and homodimer. Interacts with FBXO7.

The protein localises to the cytoplasm. The protein resides in the endoplasmic reticulum. Its function is as follows. Plays an important role in control of proteasome function. Inhibits the hydrolysis of protein and peptide substrates by the 20S proteasome. Also inhibits the activation of the proteasome by the proteasome regulatory proteins PA700 and PA28. The protein is Proteasome inhibitor PI31 subunit (Psmf1) of Rattus norvegicus (Rat).